Consider the following 458-residue polypeptide: Exodeoxyribonuclease 7 large subunit (458 aa).

Belongs to the XseA family. As to quaternary structure, heterooligomer composed of large and small subunits.

The protein localises to the cytoplasm. The enzyme catalyses Exonucleolytic cleavage in either 5'- to 3'- or 3'- to 5'-direction to yield nucleoside 5'-phosphates.. In terms of biological role, bidirectionally degrades single-stranded DNA into large acid-insoluble oligonucleotides, which are then degraded further into small acid-soluble oligonucleotides. The chain is Exodeoxyribonuclease 7 large subunit from Escherichia coli (strain UTI89 / UPEC).